We begin with the raw amino-acid sequence, 28 residues long: M-ectatotoxin-Eb2c (28 aa).

As to expression, expressed by the venom gland.

It localises to the secreted. Its function is as follows. Antimicrobial peptide active against Gram-negative bacterium E.coli MH1 (MIC=3.5 uM) and P.aeruginosa PAO1 (MIC=10 uM) and against Gram-positive bacterium A.globiformis VKM Ac-1112 (MIC=1.25 uM). The chain is M-ectatotoxin-Eb2c from Ectatomma brunneum (Ant).